The sequence spans 913 residues: DNA polymerase (913 aa).

A contains conserved residues essential for 3' -&gt; 5' exonuclease activities region spans residues 182–401; sequence PLIIASWDIE…AYARKDTDLP (220 aa).

It belongs to the DNA polymerase type-B family.

It carries out the reaction DNA(n) + a 2'-deoxyribonucleoside 5'-triphosphate = DNA(n+1) + diphosphate. In addition to polymerase activity, this DNA polymerase potentially exhibits 3' to 5' exonuclease activity. In Chlorella (PBCV-NY2A), this protein is DNA polymerase (DPO).